The chain runs to 467 residues: MSSILPFTPPVVKRLLGWKKSAGGSGGAGGGEQNGQEEKWCEKAVKSLVKKLKKTGRLDELEKAITTQNCNTKCVTIPSTCSEIWGLSTPNTIDQWDTTGLYSFSEQTRSLDGRLQVSHRKGLPHVIYCRLWRWPDLHSHHELKAIENCEYAFNLKEDEVCVNPYHYQRVETPVLPPVLVPRHTEILTELPPLDDYTHSIPENTNFPAGIEPQSNYIPETPPPGYISEDGETSDQQLNQSMDTGSPAELSPTTLSPVNHSLDLQPVTYSEPAFWCSIAYYELNQRVGETFHASQPSLTVDGFTDPSNSERFCLGLLSNVNRNATVEMTRRHIGRGVRLYYIGGEVFAECLSDSAIFVQSPNCNQRYGWHPATVCKIPPGCNLKIFNNQEFAALLAQSVNQGFEAVYQLTRMCTIRMSFVKGWGAEYRRQTVTSTPCWIELHLNGPLQWLDKVLTQMGSPSVRCSSMS.

An N-acetylserine modification is found at S2. T8 bears the Phosphothreonine mark. Positions 10 to 176 constitute an MH1 domain; sequence PVVKRLLGWK…YQRVETPVLP (167 aa). K19 bears the N6-acetyllysine mark. C74, C149, C161, and H166 together coordinate Zn(2+). The segment covering 207-217 has biased composition (polar residues); sequence PAGIEPQSNYI. The interval 207-251 is disordered; the sequence is PAGIEPQSNYIPETPPPGYISEDGETSDQQLNQSMDTGSPAELSP. At T220 the chain carries Phosphothreonine. The PY-motif motif lies at 221 to 225; that stretch reads PPPGY. The segment covering 233-243 has biased composition (polar residues); the sequence is SDQQLNQSMDT. Residue S240 is modified to Phosphoserine; by CAMK2. Residues S245, S250, S255, S458, S460, and S464 each carry the phosphoserine modification. Residues 274 to 467 form the MH2 domain; that stretch reads WCSIAYYELN…SPSVRCSSMS (194 aa). Phosphoserine; by TGFBR1 is present on residues S465 and S467.

The protein belongs to the dwarfin/SMAD family. As to quaternary structure, monomer; in the absence of TGF-beta. Heterodimer; in the presence of TGF-beta. Forms a heterodimer with co-SMAD, SMAD4, in the nucleus to form the transactivation complex SMAD2/SMAD4. Found in a complex with SMAD3 and TRIM33 upon addition of TGF-beta. Identified in a complex that contains at least ZNF451, SMAD2, SMAD3 and SMAD4. Interacts (via the MH2 domain) with ZFYVE9; may form trimers with the SMAD4 co-SMAD. Interacts with TAZ/WWRT1. Interacts with FOXH1. Interacts with SNW1. Interacts with CREB-binding protein (CBP) and EP300. Interacts with SNON. Interacts with ALK4/ACVR1B. Interacts with SKOR1. Interacts with SKOR2. Interacts with PRDM16. Interacts (via MH2 domain) with LEMD3. Interacts with RBPMS. Interacts with WWP1. Interacts (dephosphorylated form, via the MH1 and MH2 domains) with RANBP3 (via its C-terminal R domain); the interaction results in the export of dephosphorylated SMAD3 out of the nucleus and termination of the TGF-beta signaling. Interacts with PDPK1 (via PH domain). Interacts with DAB2; the interactions are enhanced upon TGF-beta stimulation. Interacts with USP15. Interacts with PPP5C. Interacts with LDLRAD4 (via the SMAD interaction motif). Interacts (via MH2 domain) with PMEPA1 (via the SMAD interaction motif). Interacts with ZFHX3. Interacts with ZNF451. Interacts with SMURF2 when phosphorylated on Ser-465/467. Interacts with PPM1A. Interacts with TGF-beta. Interacts with TGFBR1. Interacts with TGIF. Interacts with SMAD3 and TRIM33. Interacts with ZNF580. Interacts with NEDD4L in response to TGF-beta. Interacts with HGS. Interacts with AIP1. Interacts with WWP1. Interacts with PML. Interacts weakly with ZNF8. Interacts (when phosphorylated) with RNF111; RNF111 acts as an enhancer of the transcriptional responses by mediating ubiquitination and degradation of SMAD2 inhibitors. Interacts with YAP1 (when phosphorylated at 'Ser-55'). Interacts when phosphorylated with IPO7; the interaction facilitates translocation of SMAD2 to the nucleus. Interacts with MTMR4; negatively regulates TGF-beta signaling through SMAD2 dephosphorylation and retention in endosomes. Post-translationally, in response to TGF-beta, phosphorylated on the C-terminal SXS motif by TGF-beta and activin type 1 receptor kinases, phosphorylation declines progressively in a KMT5A-dependent manner. Phosphorylation in this motif is required for interaction with a number of proteins including SMURF2, SNON and SMAD4 in response to TGF-beta. Dephosphorylated in this motif by PPM1A leading to disruption of the SMAD2/3-SMAD4 complex, nuclear export and termination of the TGF-beta signaling. In response to decorin, the naturally occurring inhibitor of TGF-beta signaling, phosphorylated on Ser-240 by CaMK2. Phosphorylated by MAPK3 upon EGF stimulation; which increases transcriptional activity and stability, and is blocked by calmodulin. Phosphorylated by PDPK1. In terms of processing, acetylated on Lys-19 by coactivators in response to TGF-beta signaling, which increases transcriptional activity. In response to TGF-beta, ubiquitinated by NEDD4L; which promotes its degradation. Monoubiquitinated, leading to prevent DNA-binding. Deubiquitination by USP15 alleviates inhibition and promotes activation of TGF-beta target genes. Ubiquitinated by RNF111, leading to its degradation: only SMAD2 proteins that are 'in use' are targeted by RNF111, RNF111 playing a key role in activating SMAD2 and regulating its turnover.

It is found in the cytoplasm. It localises to the nucleus. In terms of biological role, receptor-regulated SMAD (R-SMAD) that is an intracellular signal transducer and transcriptional modulator activated by TGF-beta (transforming growth factor) and activin type 1 receptor kinases. Binds the TRE element in the promoter region of many genes that are regulated by TGF-beta and, on formation of the SMAD2/SMAD4 complex, activates transcription. Promotes TGFB1-mediated transcription of odontoblastic differentiation genes in dental papilla cells. Positively regulates PDPK1 kinase activity by stimulating its dissociation from the 14-3-3 protein YWHAQ which acts as a negative regulator. This Pongo abelii (Sumatran orangutan) protein is Mothers against decapentaplegic homolog 2 (SMAD2).